Here is a 475-residue protein sequence, read N- to C-terminus: UDP-N-acetylmuramate--L-alanine ligase (475 aa).

Position 117–123 (117–123 (GTHGKTT)) interacts with ATP.

This sequence belongs to the MurCDEF family.

The protein localises to the cytoplasm. The enzyme catalyses UDP-N-acetyl-alpha-D-muramate + L-alanine + ATP = UDP-N-acetyl-alpha-D-muramoyl-L-alanine + ADP + phosphate + H(+). Its pathway is cell wall biogenesis; peptidoglycan biosynthesis. Functionally, cell wall formation. In Chlorobaculum tepidum (strain ATCC 49652 / DSM 12025 / NBRC 103806 / TLS) (Chlorobium tepidum), this protein is UDP-N-acetylmuramate--L-alanine ligase.